We begin with the raw amino-acid sequence, 220 residues long: Cytidylate kinase (220 aa).

An ATP-binding site is contributed by 10–18 (GPASSGKST).

Belongs to the cytidylate kinase family. Type 1 subfamily.

The protein resides in the cytoplasm. It carries out the reaction CMP + ATP = CDP + ADP. The catalysed reaction is dCMP + ATP = dCDP + ADP. The chain is Cytidylate kinase from Lactococcus lactis subsp. lactis (strain IL1403) (Streptococcus lactis).